A 772-amino-acid polypeptide reads, in one-letter code: Angiomotin-like protein 2 (772 aa).

Disordered stretches follow at residues 41–158 (GGAG…HVRS), 170–239 (RNGA…SPHF), and 260–299 (QYQY…PSAQ). 3 stretches are compositionally biased toward basic and acidic residues: residues 80-91 (QGGETHLAENRL), 100-112 (KGEE…EAKA), and 142-153 (RRQDEALRELRH). Positions 101 to 303 (GEELPTYEEA…GPPSAQATLG (203 aa)) are required for interaction with CDH5. Tyrosine 107 bears the Phosphotyrosine; by FGFR1 mark. Residues 178-191 (HMSSSHSFPQLARS) show a composition bias toward polar residues. Over residues 197–214 (PRGPPAEGPEPRGPPPQY) the composition is skewed to pro residues. The required for interaction with CDH1 stretch occupies residues 221–303 (QETAAVTDPR…GPPSAQATLG (83 aa)). Residues 305–578 (AHLAQMETVL…KYLEERAMRQ (274 aa)) are a coiled coil. Glycyl lysine isopeptide (Lys-Gly) (interchain with G-Cter in ubiquitin) cross-links involve residues lysine 343 and lysine 404. Disordered regions lie at residues 596–615 (IRHS…LLPG) and 680–752 (GLVS…RTPS). Positions 686–699 (RQTDARPAGDRVPA) are enriched in basic and acidic residues. Polar residues predominate over residues 718 to 733 (DGSTQTDGPADNTSAC). Residues serine 752 and serine 755 each carry the phosphoserine modification. Positions 769-772 (EILI) match the PDZ-binding motif.

Belongs to the angiomotin family. In terms of assembly, part of a complex composed of AMOTL2, MAGI1 and CDH5, within the complex AMOTL2 acts as a scaffold protein for the interaction of MAGI1 with CDH5. The complex is required for coupling actin fibers to cell junctions in endothelial cells. Within the complex AMOTL2 (via its N-terminus) interacts with CDH5. Interacts (via N-terminus) with MAGI1. Interacts (via N-terminus) with ACTB; the interaction facilitates binding of cell junction complexes to actin fibers in endothelial cells. Interacts with CDH1; the interaction may facilitate binding of radial actin fibers to cell junction complexes. Interacts with SRC. Interacts with YAP1; the interaction is required for ubiquitination of AMOTL2 and localization of YAP1 to tight junctions. Interacts with WWP1; the interaction facilitates WWP1 interaction with the Crumbs complex and subsequent WWP1 translocation to the plasma membrane. WWP1 interaction with the Crumbs complex promotes WWP1 monoubiquitination of AMOTL2 which subsequently activates the Hippo signaling pathway. When ubiquitinated interacts with LATS2 (via UBA domain); the interaction promotes LATS2 phosphorylation of YAP1. Interacts (via PPXY motif) with WWTR1/TAZ (via WW domain); the interaction promotes WWTR1/TAZ localization to the cytoplasm and thereby inhibition of its transcriptional properties. Interacts with PHLDB2; interaction may facilitate PHLDB2 localization to the myotube podosome cortex that surrounds the core. Phosphorylation at Tyr-107 is necessary for efficient binding to SRC and synergistically functioning with SRC to activate the downstream MAPK pathway. Post-translationally, monoubiquitinated at Lys-343 and Lys-404 by Crumbs complex-bound WWP1. De-ubiquitinated at Lys-343 and Lys-404 by USP9X; the interaction may be promoted by cell contact inhibition. Deubiquitination of AMOTL2 negatively regulates Hippo signaling activation. As to expression, expressed in skeletal muscle at neuromuscular junctions (at protein level).

Its subcellular location is the recycling endosome. The protein resides in the cytoplasm. It is found in the cell projection. It localises to the podosome. The protein localises to the cell junction. Its function is as follows. Regulates the translocation of phosphorylated SRC to peripheral cell-matrix adhesion sites. Required for proper architecture of actin filaments. Plays a role in coupling actin fibers to cell junctions in endothelial cells and is therefore required for correct endothelial cell morphology via facilitating transcellular transmission of mechanical force resulting in endothelial cell elongation. Required for the anchoring of radial actin fibers to CDH1 junction complexes at the cell membrane which facilitates organization of radial actin fiber structure and cellular response to contractile forces. This contributes to maintenance of cell area, size, shape, epithelial sheet organization and trophectoderm cell properties that facilitate blastocyst zona hatching. Inhibits the Wnt/beta-catenin signaling pathway, probably by recruiting CTNNB1 to recycling endosomes and hence preventing its translocation to the nucleus. Participates in angiogenesis. Activates the Hippo signaling pathway in response to cell contact inhibition via interaction with and ubiquitination by Crumbs complex-bound WWP1. Ubiquitinated AMOTL2 then interacts with LATS2 which in turn phosphorylates YAP1, excluding it from the nucleus and localizing it to the cytoplasm and tight junctions, therefore ultimately repressing YAP1-driven transcription of target genes. Acts to inhibit WWTR1/TAZ transcriptional coactivator activity via sequestering WWTR1/TAZ in the cytoplasm and at tight junctions. Regulates the size and protein composition of the podosome cortex and core at myofibril neuromuscular junctions. Selectively promotes FGF-induced MAPK activation through SRC. May play a role in the polarity, proliferation and migration of endothelial cells. This Mus musculus (Mouse) protein is Angiomotin-like protein 2.